Consider the following 471-residue polypeptide: MKIKTRFAPSPTGYLHVGGARTALYSWLFARNHGGEFVLRIEDTDLERSTPEAIEAIMDGMNWLSLEWDEGPYFQTKRFDRYNAVIDEMLEAGTAYKCYCSKERLEALREEQMAKGEKPRYDGRCRHGHEHHSDDEPCVVRFANPQDGSVIFDDQIRGSIEFSNQELDDLIIRRTDGSPTYNFCVVVDDWDMEITHVIRGEDHINNTPRQINILKALNAPVPVYAHVSMINGDDGKKLSKRHGAVSVMQYRDDGYLPEALLNYLVRLGWSSGDQEIFTREEMIKLFSLNAVSKSASAFNTDKLLWLNHHYINSLAPEYVATHLQWHIEQENIDTRNGPQLAELVKLLGERCKTLKEMAQSCRYFYEDFAEFDADAAKKHLRPVARQPLEVVRDKLAAITEWSAENVHHAIQATADELEVGMGKVGMPLRVAVTGAGQSPALDVTVHAIGKSRSIERINKALAFIAERENQQ.

Positions 9-19 (PSPTGYLHVGG) match the 'HIGH' region motif. Residues C98, C100, C125, and H127 each contribute to the Zn(2+) site. The short motif at 237-241 (KLSKR) is the 'KMSKS' region element. K240 lines the ATP pocket.

This sequence belongs to the class-I aminoacyl-tRNA synthetase family. Glutamate--tRNA ligase type 1 subfamily. In terms of assembly, monomer. The cofactor is Zn(2+).

Its subcellular location is the cytoplasm. The catalysed reaction is tRNA(Glu) + L-glutamate + ATP = L-glutamyl-tRNA(Glu) + AMP + diphosphate. Functionally, catalyzes the attachment of glutamate to tRNA(Glu) in a two-step reaction: glutamate is first activated by ATP to form Glu-AMP and then transferred to the acceptor end of tRNA(Glu). The polypeptide is Glutamate--tRNA ligase (Citrobacter koseri (strain ATCC BAA-895 / CDC 4225-83 / SGSC4696)).